A 142-amino-acid polypeptide reads, in one-letter code: Type 3 secretion system pilotin (142 aa).

The first 23 residues, 1 to 23 (MIRHGSNKLKIFILSILLLTLSG), serve as a signal peptide directing secretion. A lipid anchor (N-palmitoyl cysteine) is attached at Cys-24. Residue Cys-24 is the site of S-diacylglycerol cysteine attachment.

This sequence belongs to the MxiM family. Monomer. Interacts with the secretin MxiD/SctC.

It localises to the cell outer membrane. In terms of biological role, involved in the synthesis of the type III secretion system (T3SS), also called injectisome, which is used to inject bacterial effector proteins into eukaryotic host cells. Pilot protein that is required for the proper localization of the secretin MxiD/SctC in the outer membrane. Also influences both MxiD/SctC multimerization and stability. Required for both Ipa translocation and tissue culture cell invasion. Binds lipids. The protein is Type 3 secretion system pilotin of Shigella flexneri.